Here is a 596-residue protein sequence, read N- to C-terminus: Elongation factor 4 (596 aa).

The tr-type G domain maps to 2 to 184; that stretch reads KHIRNFSIIA…EIVAKIPPPV (183 aa). GTP is bound by residues 14–19 and 131–134; these read DHGKST and NKID.

It belongs to the TRAFAC class translation factor GTPase superfamily. Classic translation factor GTPase family. LepA subfamily.

Its subcellular location is the cell inner membrane. It carries out the reaction GTP + H2O = GDP + phosphate + H(+). In terms of biological role, required for accurate and efficient protein synthesis under certain stress conditions. May act as a fidelity factor of the translation reaction, by catalyzing a one-codon backward translocation of tRNAs on improperly translocated ribosomes. Back-translocation proceeds from a post-translocation (POST) complex to a pre-translocation (PRE) complex, thus giving elongation factor G a second chance to translocate the tRNAs correctly. Binds to ribosomes in a GTP-dependent manner. This Shewanella denitrificans (strain OS217 / ATCC BAA-1090 / DSM 15013) protein is Elongation factor 4.